The chain runs to 68 residues: MKLSVMFIVALVLSLSMTDGLPRRAENGGRIFRQHSPDSMDPQTRQIKTRTLCPEHCTNGCNMDMTCI.

The N-terminal stretch at methionine 1 to glycine 20 is a signal peptide. Positions leucine 21–arginine 50 are excised as a propeptide.

In terms of processing, contains 2 disulfide bonds. In terms of tissue distribution, expressed by the venom duct.

It localises to the secreted. This Conus bayani (Bayan's cone) protein is Conotoxin ba14a.